The following is a 206-amino-acid chain: 7-methyl-GTP pyrophosphatase (206 aa).

The Proton acceptor role is filled by Asp-82.

The protein belongs to the Maf family. YceF subfamily. A divalent metal cation serves as cofactor.

The protein localises to the cytoplasm. It carries out the reaction N(7)-methyl-GTP + H2O = N(7)-methyl-GMP + diphosphate + H(+). In terms of biological role, nucleoside triphosphate pyrophosphatase that hydrolyzes 7-methyl-GTP (m(7)GTP). May have a dual role in cell division arrest and in preventing the incorporation of modified nucleotides into cellular nucleic acids. The protein is 7-methyl-GTP pyrophosphatase of Shewanella denitrificans (strain OS217 / ATCC BAA-1090 / DSM 15013).